A 328-amino-acid polypeptide reads, in one-letter code: Biotin synthase (328 aa).

Residues 49–273 (FNKEKIETCS…ICISRIIMPE (225 aa)) form the Radical SAM core domain. [4Fe-4S] cluster-binding residues include C67, C71, and C74. Residues S110, C142, C201, and R277 each contribute to the [2Fe-2S] cluster site.

Belongs to the radical SAM superfamily. Biotin synthase family. Homodimer. It depends on [4Fe-4S] cluster as a cofactor. [2Fe-2S] cluster serves as cofactor.

The catalysed reaction is (4R,5S)-dethiobiotin + (sulfur carrier)-SH + 2 reduced [2Fe-2S]-[ferredoxin] + 2 S-adenosyl-L-methionine = (sulfur carrier)-H + biotin + 2 5'-deoxyadenosine + 2 L-methionine + 2 oxidized [2Fe-2S]-[ferredoxin]. It participates in cofactor biosynthesis; biotin biosynthesis; biotin from 7,8-diaminononanoate: step 2/2. Catalyzes the conversion of dethiobiotin (DTB) to biotin by the insertion of a sulfur atom into dethiobiotin via a radical-based mechanism. In Methanococcus vannielii (strain ATCC 35089 / DSM 1224 / JCM 13029 / OCM 148 / SB), this protein is Biotin synthase.